The chain runs to 212 residues: Uridine kinase (212 aa).

12–19 (GGSGGGKT) is a binding site for ATP.

Belongs to the uridine kinase family.

It is found in the cytoplasm. It catalyses the reaction uridine + ATP = UMP + ADP + H(+). It carries out the reaction cytidine + ATP = CMP + ADP + H(+). It participates in pyrimidine metabolism; CTP biosynthesis via salvage pathway; CTP from cytidine: step 1/3. The protein operates within pyrimidine metabolism; UMP biosynthesis via salvage pathway; UMP from uridine: step 1/1. In Streptococcus pneumoniae serotype 2 (strain D39 / NCTC 7466), this protein is Uridine kinase.